The primary structure comprises 487 residues: Glucose starvation modulator protein 1 (487 aa).

The segment at 1-75 (MSIRFPEIPG…KRLTPQEKKA (75 aa)) is disordered. Residues 59 to 68 (SFSSSMTKRL) show a composition bias toward polar residues. The segment at residues 83–111 (CVFCHSKHLQCSHSRPCQNCIKRNLAHEC) is a DNA-binding region (zn(2)-C6 fungal-type). A compositionally biased stretch (polar residues) spans 122–139 (MSTTEVPAVSGESSSESG). The segment at 122–158 (MSTTEVPAVSGESSSESGRATGENGSEMGNPPDPQIA) is disordered. The PAS domain maps to 348–420 (CLLDYENLSR…FRLFESVAVG (73 aa)).

It belongs to the ERT1/acuK family.

Its subcellular location is the nucleus. Its function is as follows. Transcription factor which regulates nonfermentable carbon utilization. The protein is Glucose starvation modulator protein 1 (GSM1) of Clavispora lusitaniae (strain ATCC 42720) (Yeast).